Reading from the N-terminus, the 630-residue chain is Biosynthetic arginine decarboxylase (630 aa).

The residue at position 99 (Lys-99) is an N6-(pyridoxal phosphate)lysine. Substrate is bound at residue 279–289; sequence FDVGGGLGVDY.

It belongs to the Orn/Lys/Arg decarboxylase class-II family. SpeA subfamily. The cofactor is Mg(2+). Pyridoxal 5'-phosphate is required as a cofactor.

It carries out the reaction L-arginine + H(+) = agmatine + CO2. The protein operates within amine and polyamine biosynthesis; agmatine biosynthesis; agmatine from L-arginine: step 1/1. Its function is as follows. Catalyzes the biosynthesis of agmatine from arginine. This is Biosynthetic arginine decarboxylase from Neisseria meningitidis serogroup B (strain ATCC BAA-335 / MC58).